The primary structure comprises 161 residues: Allophycocyanin beta chain (161 aa).

N71 carries the N4-methylasparagine modification. C81 contacts (2R,3E)-phycocyanobilin.

This sequence belongs to the phycobiliprotein family. Heterodimer of an alpha and a beta chain. Contains one covalently linked phycocyanobilin chromophore.

The protein resides in the plastid. It is found in the cyanelle thylakoid membrane. Functionally, light-harvesting photosynthetic bile pigment-protein from the phycobiliprotein complex. Allophycocyanin has a maximum absorption at approximately 650 nanometers. The protein is Allophycocyanin beta chain (apcB) of Cyanophora paradoxa.